The chain runs to 57 residues: DNA-directed RNA polymerase subunit Rpo6 (57 aa).

It belongs to the archaeal Rpo6/eukaryotic RPB6 RNA polymerase subunit family. As to quaternary structure, part of the RNA polymerase complex.

The protein resides in the cytoplasm. The enzyme catalyses RNA(n) + a ribonucleoside 5'-triphosphate = RNA(n+1) + diphosphate. In terms of biological role, DNA-dependent RNA polymerase (RNAP) catalyzes the transcription of DNA into RNA using the four ribonucleoside triphosphates as substrates. This is DNA-directed RNA polymerase subunit Rpo6 from Haloarcula marismortui (strain ATCC 43049 / DSM 3752 / JCM 8966 / VKM B-1809) (Halobacterium marismortui).